We begin with the raw amino-acid sequence, 558 residues long: uncharacterized protein (558 aa).

A coiled-coil region spans residues 47 to 78; that stretch reads DFDDLNSIFKDFQKQKKNLKDNILKFYNKKKE. Disordered regions lie at residues 239–266 and 424–447; these read NNNN…SKIE and NNNN…NSGE. Positions 245–266 are enriched in basic and acidic residues; it reads TETESEIESKSESESESESKIE. The segment covering 424 to 444 has biased composition (low complexity); sequence NNNNNNNNNNNNNNNNNNNNN.

This is an uncharacterized protein from Dictyostelium discoideum (Social amoeba).